Here is a 61-residue protein sequence, read N- to C-terminus: MARKAIIEKWSKTPKYKTRAYTRCRICGRPHAVLRKYGVCRICFRELAYKGEIPGCRKASW.

Residues Cys-24, Cys-27, Cys-40, and Cys-43 each coordinate Zn(2+).

This sequence belongs to the universal ribosomal protein uS14 family. Zinc-binding uS14 subfamily. As to quaternary structure, part of the 30S ribosomal subunit. Contacts proteins S3 and S10. Zn(2+) is required as a cofactor.

Functionally, binds 16S rRNA, required for the assembly of 30S particles and may also be responsible for determining the conformation of the 16S rRNA at the A site. This is Small ribosomal subunit protein uS14 from Clostridium botulinum (strain Alaska E43 / Type E3).